A 578-amino-acid polypeptide reads, in one-letter code: A-type ATP synthase subunit A (578 aa).

ATP is bound at residue 228-235 (GPFGSGKT).

It belongs to the ATPase alpha/beta chains family. As to quaternary structure, has multiple subunits with at least A(3), B(3), C, D, E, F, H, I and proteolipid K(x).

It is found in the cell membrane. It catalyses the reaction ATP + H2O + 4 H(+)(in) = ADP + phosphate + 5 H(+)(out). Functionally, component of the A-type ATP synthase that produces ATP from ADP in the presence of a proton gradient across the membrane. The A chain is the catalytic subunit. The polypeptide is A-type ATP synthase subunit A (Methanosarcina barkeri (strain Fusaro / DSM 804)).